A 190-amino-acid polypeptide reads, in one-letter code: Peptidyl-tRNA hydrolase (190 aa).

Tyrosine 14 is a binding site for tRNA. The active-site Proton acceptor is the histidine 19. Tyrosine 64, asparagine 66, and asparagine 112 together coordinate tRNA.

This sequence belongs to the PTH family. As to quaternary structure, monomer.

It localises to the cytoplasm. It carries out the reaction an N-acyl-L-alpha-aminoacyl-tRNA + H2O = an N-acyl-L-amino acid + a tRNA + H(+). Its function is as follows. Hydrolyzes ribosome-free peptidyl-tRNAs (with 1 or more amino acids incorporated), which drop off the ribosome during protein synthesis, or as a result of ribosome stalling. Catalyzes the release of premature peptidyl moieties from peptidyl-tRNA molecules trapped in stalled 50S ribosomal subunits, and thus maintains levels of free tRNAs and 50S ribosomes. This is Peptidyl-tRNA hydrolase from Chlorobium luteolum (strain DSM 273 / BCRC 81028 / 2530) (Pelodictyon luteolum).